Reading from the N-terminus, the 353-residue chain is Phosphoribosylformylglycinamidine cyclo-ligase (353 aa).

It belongs to the AIR synthase family.

It localises to the cytoplasm. It carries out the reaction 2-formamido-N(1)-(5-O-phospho-beta-D-ribosyl)acetamidine + ATP = 5-amino-1-(5-phospho-beta-D-ribosyl)imidazole + ADP + phosphate + H(+). Its pathway is purine metabolism; IMP biosynthesis via de novo pathway; 5-amino-1-(5-phospho-D-ribosyl)imidazole from N(2)-formyl-N(1)-(5-phospho-D-ribosyl)glycinamide: step 2/2. This is Phosphoribosylformylglycinamidine cyclo-ligase from Pseudomonas aeruginosa (strain ATCC 15692 / DSM 22644 / CIP 104116 / JCM 14847 / LMG 12228 / 1C / PRS 101 / PAO1).